Here is a 353-residue protein sequence, read N- to C-terminus: Methylthioribose-1-phosphate isomerase (353 aa).

Substrate-binding positions include 51–53, R94, and Q199; that span reads RGA. The active-site Proton donor is D240. 250–251 contributes to the substrate binding site; that stretch reads NK.

This sequence belongs to the eIF-2B alpha/beta/delta subunits family. MtnA subfamily. Homodimer.

The enzyme catalyses 5-(methylsulfanyl)-alpha-D-ribose 1-phosphate = 5-(methylsulfanyl)-D-ribulose 1-phosphate. The protein operates within amino-acid biosynthesis; L-methionine biosynthesis via salvage pathway; L-methionine from S-methyl-5-thio-alpha-D-ribose 1-phosphate: step 1/6. Its function is as follows. Catalyzes the interconversion of methylthioribose-1-phosphate (MTR-1-P) into methylthioribulose-1-phosphate (MTRu-1-P). This Bacillus licheniformis (strain ATCC 14580 / DSM 13 / JCM 2505 / CCUG 7422 / NBRC 12200 / NCIMB 9375 / NCTC 10341 / NRRL NRS-1264 / Gibson 46) protein is Methylthioribose-1-phosphate isomerase.